The sequence spans 165 residues: Ubiquitin D (165 aa).

Ubiquitin-like domains follow at residues 6 to 81 and 90 to 163; these read SCLC…LKVV and LFLV…CYCI.

This sequence belongs to the ubiquitin D family. Interacts directly with the 26S proteasome. Interacts with NUB1; this interaction facilitates the linking of UBD-conjugated target protein to the proteasome complex and accelerates its own degradation and that of its conjugates. Interacts (via ubiquitin-like 1 domain) with the spindle checkpoint protein MAD2L1 during mitosis. Present in aggresomes of proteasome inhibited cells. Interacts with HDAC6 under proteasome impairment conditions. Forms a thioester with UBA6 in cells stimulated with tumor necrosis factor-alpha (TNFa) and interferon-gamma (IFNg). Interacts with SQSTM1 and TP53/p53. In terms of processing, can be acetylated. In terms of tissue distribution, constitutively expressed in mature dendritic cells and B-cells. Mostly expressed in the reticuloendothelial system (e.g. thymus, spleen), the gastrointestinal system, kidney, lung and prostate gland.

Its subcellular location is the nucleus. It localises to the cytoplasm. In terms of biological role, ubiquitin-like protein modifier which can be covalently attached to target proteins and subsequently leads to their degradation by the 26S proteasome, in a NUB1-dependent manner. Conjugation to the target protein is activated by UBA6 via adenylation of its C-terminal glycine. Promotes the expression of the proteasome subunit beta type-9 (PSMB9/LMP2). Regulates TNF-alpha-induced and LPS-mediated activation of the central mediator of innate immunity NF-kappa-B by promoting TNF-alpha-mediated proteasomal degradation of ubiquitinated-I-kappa-B-alpha. Required for TNF-alpha-induced p65 nuclear translocation in renal tubular epithelial cells (RTECs). May be involved in dendritic cell (DC) maturation, the process by which immature dendritic cells differentiate into fully competent antigen-presenting cells that initiate T-cell responses. Mediates mitotic non-disjunction and chromosome instability, in long-term in vitro culture and cancers, by abbreviating mitotic phase and impairing the kinetochore localization of MAD2L1 during the prometaphase stage of the cell cycle. May be involved in the formation of aggresomes when proteasome is saturated or impaired. Mediates apoptosis in a caspase-dependent manner, especially in renal epithelium and tubular cells during renal diseases such as polycystic kidney disease and Human immunodeficiency virus (HIV)-associated nephropathy (HIVAN). This chain is Ubiquitin D (UBD), found in Homo sapiens (Human).